The chain runs to 230 residues: Putative transcription factor bHLH107 (230 aa).

Positions 44 to 93 (ASLRNHKEAERKRRARINSHLNKLRKLLSCNSKTDKSTLLAKVVQRVKEL) constitute a bHLH domain.

As to quaternary structure, homodimer.

It localises to the nucleus. The polypeptide is Putative transcription factor bHLH107 (BHLH107) (Arabidopsis thaliana (Mouse-ear cress)).